A 3579-amino-acid polypeptide reads, in one-letter code: Protocadherin-like wing polarity protein stan (3579 aa).

The N-terminal stretch at 1 to 29 (MQTREFPQRPLGLLLVLLVVLLQSSLIKS) is a signal peptide. Residues 30 to 2816 (YLIIVHEDTP…EPSLLVQITS (2787 aa)) are Extracellular-facing. N-linked (GlcNAc...) asparagine glycans are attached at residues Asn-46, Asn-179, and Asn-340. Cadherin domains follow at residues 360–464 (EQAL…SPTF), 465–581 (EAEQ…YPQF), 582–689 (SERT…APRF), 690–794 (YTSQ…DPAF), 795–897 (NPKY…APIF), 898–1007 (ENAP…APAF), 1008–1113 (KSPL…PPTF), and 1114–1220 (ASDK…APVL). Asn-671 is a glycosylation site (N-linked (GlcNAc...) asparagine). Asn-886 carries an N-linked (GlcNAc...) asparagine glycan. 3 N-linked (GlcNAc...) asparagine glycosylation sites follow: Asn-1269, Asn-1374, and Asn-1441. The 37-residue stretch at 1482-1518 (EVDLCYSDPCQNGGTCVRREGGYTCVCPSTHTGQNCE) folds into the EGF-like 1; calcium-binding domain. Disulfide bonds link Cys-1486-Cys-1497, Cys-1491-Cys-1506, and Cys-1508-Cys-1517. Residues 1556–1753 (LRARAFGRNS…VADNGTLAGC (198 aa)) enclose the Laminin G-like 1 domain. 3 N-linked (GlcNAc...) asparagine glycosylation sites follow: Asn-1650, Asn-1678, and Asn-1747. Cystine bridges form between Cys-1727–Cys-1753, Cys-1760–Cys-1771, Cys-1765–Cys-1780, and Cys-1782–Cys-1791. The EGF-like 2; calcium-binding domain occupies 1756–1792 (KAPLCQSEPCFNGGTCREGWGTYSCECPEGYAGNSCQ). The Laminin G-like 2 domain maps to 1796–1963 (PAPWRFSGDG…TIRENVEDGC (168 aa)). An N-linked (GlcNAc...) asparagine glycan is attached at Asn-1843. 4 disulfide bridges follow: Cys-1937-Cys-1963, Cys-1969-Cys-1979, Cys-1973-Cys-1988, and Cys-1990-Cys-1999. One can recognise an EGF-like 3; calcium-binding domain in the interval 1965–2000 (SRAQCPDHCPNHSSCQSSWDLSTCECDSGYVGTDCA). Asn-1975 carries an N-linked (GlcNAc...) asparagine glycan. N-linked (GlcNAc...) asparagine glycans are attached at residues Asn-2016, Asn-2028, Asn-2071, and Asn-2088. Cystine bridges form between Cys-2092–Cys-2095, Cys-2097–Cys-2114, Cys-2116–Cys-2125, and Cys-2128–Cys-2140. A Laminin EGF-like domain is found at 2095 to 2142 (CDCYSIGSFSGACNPLTGQCECREGVIGRRCDSCSNPYAEVTLSGCEV). Residues Asn-2196 and Asn-2320 are each glycosylated (N-linked (GlcNAc...) asparagine). Residues 2553-2562 (QETQRLEIPS) show a composition bias toward basic and acidic residues. Disordered regions lie at residues 2553 to 2582 (QETQ…STEQ), 2610 to 2635 (HEIP…EREP), and 2654 to 2684 (VISP…GENE). Low complexity predominate over residues 2567–2579 (SSSSPSSSSSSGS). The region spanning 2653–2803 (EVISPDSPEM…AVIVDVIDPE (151 aa)) is the GAIN-B domain. Disulfide bonds link Cys-2747/Cys-2785 and Cys-2762/Cys-2787. Positions 2747 to 2803 (CVRWNSFTNQWTRLGCQTEIPDFDGDFNPAAQQAILVNCSCTHISSYAVIVDVIDPE) are GPS. Asn-2784 is a glycosylation site (N-linked (GlcNAc...) asparagine). A helical membrane pass occupies residues 2817 to 2837 (YSAFLVSLPLLLGVLLALALL). Topologically, residues 2838 to 2845 (RGQQTNSN) are cytoplasmic. Residues 2846 to 2866 (TIHQNIVLCVFCAELLFFVGM) traverse the membrane as a helical segment. The Extracellular portion of the chain corresponds to 2867–2883 (QSRRQLLESEFPCKLTA). The helical transmembrane segment at 2884–2904 (ICLHYFWLAAFAWTTVDCVHL) threads the bilayer. At 2905–2919 (YRMLTEMRDINHGPM) the chain is on the cytoplasmic side. The helical transmembrane segment at 2920-2940 (GFYFAMGYGAPAIVVGLSVGV) threads the bilayer. At 2941-2959 (RAHEYGNSLFCWLSVYEPV) the chain is on the extracellular side. The chain crosses the membrane as a helical span at residues 2960–2980 (VWWLVGPIAGMSVVNLLILFV). The Cytoplasmic portion of the chain corresponds to 2981–3000 (SVKAAFTLKDHVLGFGNLRT). The chain crosses the membrane as a helical span at residues 3001–3021 (LLWLSVVSLPLMGVMWVLAVL). Topologically, residues 3022 to 3031 (AASEHSQLLS) are extracellular. A helical transmembrane segment spans residues 3032–3052 (LLLSGVVLLHALFCLIGYCII). Residues 3053 to 3579 (NKRVRENLQR…RNIDDDETTV (527 aa)) lie on the Cytoplasmic side of the membrane. Disordered stretches follow at residues 3111–3225 (GISA…TPAY), 3343–3377 (LYGR…SGSQ), 3458–3486 (YHQQ…YHFP), and 3499–3579 (LSHT…ETTV). The segment covering 3113 to 3128 (SASSTTSRSTAKTSSS) has biased composition (low complexity). Positions 3167–3191 (RGGEEKPSRRQRKDSDSGSETDGRS) are enriched in basic and acidic residues. Phosphoserine is present on residues Ser-3199 and Ser-3200. Polar residues predominate over residues 3208-3223 (ARSSGTHRSTAVSSTP). A compositionally biased stretch (basic and acidic residues) spans 3343 to 3352 (LYGRRGEYPD). The span at 3459 to 3468 (HQQQQQQQQH) shows a compositional bias: low complexity. Basic and acidic residues predominate over residues 3469-3482 (HLQDRLSEGSDKNG). The span at 3501–3513 (HTQPPSLHGSQLM) shows a compositional bias: polar residues.

The protein belongs to the G-protein coupled receptor 2 family. As to quaternary structure, interacts with ATP6AP2 (via N-terminus). In the pupal wing, expressed at relatively even levels in all regions. Abundant in 6-9 hours embryos. Expressed at higher levels in pupae than larvae.

It localises to the cell membrane. Its subcellular location is the apical cell membrane. Its function is as follows. Involved in the fz signaling pathway that controls wing tissue polarity. Also mediates homophilic cell adhesion. May play a role in initiating prehair morphogenesis. May play a critical role in tissue polarity and in formation of normal dendrite fields. During planar cell polarity, stabilizes asymmetric PCP domains together with ATP6AP2. The polypeptide is Protocadherin-like wing polarity protein stan (stan) (Drosophila melanogaster (Fruit fly)).